The following is a 138-amino-acid chain: uncharacterized protein (138 aa).

The next 2 membrane-spanning stretches (helical) occupy residues 21–43 and 48–65; these read TAFI…AGGA and SLIA…YAII.

The protein localises to the cell membrane. This is an uncharacterized protein from Archaeoglobus fulgidus (strain ATCC 49558 / DSM 4304 / JCM 9628 / NBRC 100126 / VC-16).